A 496-amino-acid polypeptide reads, in one-letter code: Probable diguanylate cyclase DgcJ (496 aa).

A run of 2 helical transmembrane segments spans residues 11-31 and 305-325; these read FIAASVIVLTSSFLIFELVAS and ILYFITSSWKSVLFWILTALI. In terms of domain architecture, GGDEF spans 374 to 496; sequence SSVMFIAIDM…VNKQNKNSRS (123 aa). Residue Asp382 participates in Mg(2+) binding. Asn390, His395, and Asp399 together coordinate substrate. Asp425 serves as a coordination point for Mg(2+). Asp425 (proton acceptor) is an active-site residue.

In terms of assembly, homodimer. It depends on Mg(2+) as a cofactor.

It is found in the cell inner membrane. The catalysed reaction is 2 GTP = 3',3'-c-di-GMP + 2 diphosphate. Its pathway is purine metabolism; 3',5'-cyclic di-GMP biosynthesis. Catalyzes the synthesis of cyclic-di-GMP (c-di-GMP) via the condensation of 2 GTP molecules. This is Probable diguanylate cyclase DgcJ from Escherichia coli (strain K12).